A 377-amino-acid polypeptide reads, in one-letter code: Proteinase-activated receptor 3 (377 aa).

The signal sequence occupies residues 1 to 19; the sequence is MRAAIFAAIGALLLSPASC. A propeptide spans 20–38 (removed for receptor activation); that stretch reads QSGMEYDADNLAKPTLSIK. Over 39 to 94 the chain is Extracellular; the sequence is TFRGAPQNSFEEFPLSAIEGWTGTTKTVKIKCPEELDSNLHVNNATMGYLSSPLST. A glycan (N-linked (GlcNAc...) asparagine) is linked at asparagine 82. The helical transmembrane segment at 95 to 120 threads the bilayer; sequence KLIPAIYILVFAVGMPANAVTLWMLF. At 121-127 the chain is on the cytoplasmic side; sequence RTRTIRM. The chain crosses the membrane as a helical span at residues 128–147; it reads TIFYTNLAIADFLFCVTLPF. At 148–166 the chain is on the extracellular side; the sequence is RIAYHLNGNNWVFGEVMCR. A disulfide bridge links cysteine 165 with cysteine 244. Residues 167–188 traverse the membrane as a helical segment; that stretch reads ATTVIFYGNMYCSILLLACISI. Over 189–205 the chain is Cytoplasmic; that stretch reads NRYLAIVHPFTYRGLPK. A helical membrane pass occupies residues 206-229; sequence RTYALLTCGLVWTTVFLYMLPFFI. The Extracellular portion of the chain corresponds to 230 to 259; that stretch reads LKQEYYLVQQDITTCHDVHNTCESSSPFQL. The chain crosses the membrane as a helical span at residues 260–279; that stretch reads YYFISLAFFGFLIPFLVIIY. The Cytoplasmic portion of the chain corresponds to 280–296; that stretch reads CYTAIIWTLNAKDRRWL. A helical transmembrane segment spans residues 297-321; that stretch reads WYIKASLLTFVIFTICFAPSNIILI. The Extracellular segment spans residues 322 to 335; the sequence is IHHANYYYSNTDAL. A helical transmembrane segment spans residues 336-360; the sequence is YFVYLIALCLGSLNSCLDPFLYFLM. Residues 361 to 377 lie on the Cytoplasmic side of the membrane; it reads SKITDHSTAYLTMVKLS.

The protein belongs to the G-protein coupled receptor 1 family. Interacts with INSC/inscuteable and GPSM2. Post-translationally, a proteolytic cleavage generates a new N-terminus that functions as a tethered ligand.

Its subcellular location is the cell membrane. Receptor for activated thrombin coupled to G proteins that stimulate phosphoinositide hydrolysis. The polypeptide is Proteinase-activated receptor 3 (F2RL2) (Bos taurus (Bovine)).